Here is a 120-residue protein sequence, read N- to C-terminus: NAD(P)H-quinone oxidoreductase subunit 3 (120 aa).

A run of 3 helical transmembrane segments spans residues 7 to 27 (YEYF…SLTA), 64 to 84 (MFAL…PWAV), and 89 to 109 (LGLL…VALV).

This sequence belongs to the complex I subunit 3 family. NDH-1 can be composed of about 15 different subunits; different subcomplexes with different compositions have been identified which probably have different functions.

The protein localises to the cellular thylakoid membrane. It carries out the reaction a plastoquinone + NADH + (n+1) H(+)(in) = a plastoquinol + NAD(+) + n H(+)(out). The enzyme catalyses a plastoquinone + NADPH + (n+1) H(+)(in) = a plastoquinol + NADP(+) + n H(+)(out). In terms of biological role, NDH-1 shuttles electrons from an unknown electron donor, via FMN and iron-sulfur (Fe-S) centers, to quinones in the respiratory and/or the photosynthetic chain. The immediate electron acceptor for the enzyme in this species is believed to be plastoquinone. Couples the redox reaction to proton translocation, and thus conserves the redox energy in a proton gradient. Cyanobacterial NDH-1 also plays a role in inorganic carbon-concentration. This chain is NAD(P)H-quinone oxidoreductase subunit 3, found in Microcystis aeruginosa (strain NIES-843 / IAM M-2473).